An 853-amino-acid polypeptide reads, in one-letter code: DNA mismatch repair protein MutS (853 aa).

Residue 613–620 (GPNMGGKS) participates in ATP binding.

Belongs to the DNA mismatch repair MutS family.

Functionally, this protein is involved in the repair of mismatches in DNA. It is possible that it carries out the mismatch recognition step. This protein has a weak ATPase activity. This is DNA mismatch repair protein MutS from Vibrio campbellii (strain ATCC BAA-1116).